The sequence spans 508 residues: Anaerobic nitric oxide reductase transcription regulator NorR (508 aa).

D56 carries the post-translational modification 4-aspartylphosphate. The Sigma-54 factor interaction domain maps to 186–415; sequence MIGQSPAMAR…LEHAIHRAAV (230 aa). ATP-binding positions include 214–221 and 277–286; these read GETGVGKE and ADQGTLFLDE. The H-T-H motif DNA-binding region spans 483-502; the sequence is WAATARALELDSGNLHRLAK.

Its pathway is nitrogen metabolism; nitric oxide reduction. In terms of biological role, required for the expression of anaerobic nitric oxide (NO) reductase, acts as a transcriptional activator for at least the norVW operon. Activation also requires sigma-54. The polypeptide is Anaerobic nitric oxide reductase transcription regulator NorR (Aeromonas hydrophila subsp. hydrophila (strain ATCC 7966 / DSM 30187 / BCRC 13018 / CCUG 14551 / JCM 1027 / KCTC 2358 / NCIMB 9240 / NCTC 8049)).